The primary structure comprises 437 residues: Chromosomal replication initiator protein DnaA (437 aa).

Residues M1 to V72 are domain I, interacts with DnaA modulators. The interval V72–S99 is domain II. The domain III, AAA+ region stretch occupies residues G100–A320. ATP is bound by residues G144, G146, K147, and T148. The domain IV, binds dsDNA stretch occupies residues K321–I437.

It belongs to the DnaA family. As to quaternary structure, oligomerizes as a right-handed, spiral filament on DNA at oriC.

The protein resides in the cytoplasm. Plays an essential role in the initiation and regulation of chromosomal replication. ATP-DnaA binds to the origin of replication (oriC) to initiate formation of the DNA replication initiation complex once per cell cycle. Binds the DnaA box (a 9 base pair repeat at the origin) and separates the double-stranded (ds)DNA. Forms a right-handed helical filament on oriC DNA; dsDNA binds to the exterior of the filament while single-stranded (ss)DNA is stabiized in the filament's interior. The ATP-DnaA-oriC complex binds and stabilizes one strand of the AT-rich DNA unwinding element (DUE), permitting loading of DNA polymerase. After initiation quickly degrades to an ADP-DnaA complex that is not apt for DNA replication. Binds acidic phospholipids. The protein is Chromosomal replication initiator protein DnaA of Mycoplasma genitalium (strain ATCC 33530 / DSM 19775 / NCTC 10195 / G37) (Mycoplasmoides genitalium).